The primary structure comprises 88 residues: Meiosis-expressed gene 1 protein (88 aa).

Belongs to the MEIG1 family. In terms of assembly, interacts with PACRG. Interacts with MORN3. As to expression, expressed in the testes (at protein level). Expressed in the ovary. Several isoforms have been identified differing in their 5'-untranslated exons. These isoforms show different tissue expression. Some are expressed in various tissues, including lung, liver, brain, testis, oviduct and oocytes. Some are testis-specific.

Functionally, essential for spermiogenesis. The polypeptide is Meiosis-expressed gene 1 protein (Mus musculus (Mouse)).